Here is a 72-residue protein sequence, read N- to C-terminus: MAKEDVIEMQGEVTENLPNATFRVKLENGHMVLGHISGKMRMHYIRILPGDKVTVQLTPYDLTKGRIVFRTK.

The 72-residue stretch at 1 to 72 (MAKEDVIEMQ…TKGRIVFRTK (72 aa)) folds into the S1-like domain.

The protein belongs to the IF-1 family. In terms of assembly, component of the 30S ribosomal translation pre-initiation complex which assembles on the 30S ribosome in the order IF-2 and IF-3, IF-1 and N-formylmethionyl-tRNA(fMet); mRNA recruitment can occur at any time during PIC assembly.

It localises to the cytoplasm. One of the essential components for the initiation of protein synthesis. Stabilizes the binding of IF-2 and IF-3 on the 30S subunit to which N-formylmethionyl-tRNA(fMet) subsequently binds. Helps modulate mRNA selection, yielding the 30S pre-initiation complex (PIC). Upon addition of the 50S ribosomal subunit IF-1, IF-2 and IF-3 are released leaving the mature 70S translation initiation complex. The chain is Translation initiation factor IF-1 2 from Azoarcus sp. (strain BH72).